Reading from the N-terminus, the 101-residue chain is Small ribosomal subunit protein bS18c (101 aa).

Belongs to the bacterial ribosomal protein bS18 family. Part of the 30S ribosomal subunit.

Its subcellular location is the plastid. It is found in the chloroplast. The chain is Small ribosomal subunit protein bS18c from Lepidium virginicum (Virginia pepperweed).